We begin with the raw amino-acid sequence, 461 residues long: Probable lipid II flippase MurJ (461 aa).

The next 12 helical transmembrane spans lie at 5 to 25 (ILGAGVYSDIFFVAFKLPNLF), 51 to 71 (FASLVGLIFCIVLFMWCLLVA), 96 to 116 (IVAINFWYLLLVFITTFLGAL), 123 to 143 (FFASAYSASLLNVCMILALLI), 156 to 176 (LSYGVLLGGVAQILLHFYPLV), 229 to 249 (IASFLDTTIASFLASGSVSYL), 258 to 278 (LPLALFAIAISTALFPSIAIA), 293 to 313 (KAWFFLVGVLLLCSIGGIMLS), 337 to 357 (VFSLYLLGLLPFGLTKLFSLW), 372 to 392 (LISLFLGLAASLSLMPLLGVL), 402 to 422 (GLFLFVLTIKAFGFQLFLGII), and 429 to 449 (LVILFLACVEILLLLAFKSWV).

Belongs to the MurJ/MviN family.

The protein resides in the cell inner membrane. The protein operates within cell wall biogenesis; peptidoglycan biosynthesis. In terms of biological role, involved in peptidoglycan biosynthesis. Transports lipid-linked peptidoglycan precursors from the inner to the outer leaflet of the cytoplasmic membrane. In Helicobacter pylori (strain ATCC 700392 / 26695) (Campylobacter pylori), this protein is Probable lipid II flippase MurJ.